Reading from the N-terminus, the 331-residue chain is FPVLGLDSRGVGGLMNSFPPPQGHAQNPLQVGAELQSRFFASQGCAQSPFQAAPAPPPTPQAPAAEPLQVDLLPVLAAAQESAAAAAAAAAAAAAVVTAPPAPAAASTVDTAALKQPPAPPPPPPAVSAPAAEAAPPAAAATIAAAAATAVVAPTSTVAVAPVASVLEKKTKSKGPYICALCAKEFKNGYNLRRHEAIHTGAKAGRVPSGAMKMPTMVPLSLLSVPQLSGASGGGGEAGAGGGTTAVAAGGVVTTTASGKRIRKNHACEMCGKAFRDVYHLNRHKLSHSDEKPYQCPVCQQRFKRKDRMSYHVRSHDGAVHKPYNCSHCGK.

Disordered regions lie at residues 46 to 65 (AQSP…APAA) and 108 to 131 (TVDT…SAPA). Residues 117–127 (PPAPPPPPPAV) show a composition bias toward pro residues. C2H2-type zinc fingers lie at residues 177–199 (YICA…EAIH), 266–288 (HACE…KLSH), 294–316 (YQCP…VRSH), and 324–331 (YNCSHCGK).

Interacts with BPTF. As to expression, ubiquitously expressed.

The protein localises to the nucleus. Transcriptional regulator. Acts as a transcriptional activator that binds to purine-rich GAGA sites found in the promoter of many genes including insulin I and II and islet amyloid polypeptide. The chain is Myc-associated zinc finger protein (MAZ) from Mesocricetus auratus (Golden hamster).